The following is a 486-amino-acid chain: UDP-N-acetylmuramoyl-L-alanyl-D-glutamate--2,6-diaminopimelate ligase (486 aa).

Residue S30 participates in UDP-N-acetyl-alpha-D-muramoyl-L-alanyl-D-glutamate binding. 112–118 (GTNGKTT) lines the ATP pocket. UDP-N-acetyl-alpha-D-muramoyl-L-alanyl-D-glutamate contacts are provided by residues 154 to 155 (TT), S181, Q187, and R189. Residue K221 is modified to N6-carboxylysine. Meso-2,6-diaminopimelate contacts are provided by residues R378, 402-405 (DNPR), G455, and E459. A Meso-diaminopimelate recognition motif motif is present at residues 402–405 (DNPR).

Belongs to the MurCDEF family. MurE subfamily. Mg(2+) serves as cofactor. Post-translationally, carboxylation is probably crucial for Mg(2+) binding and, consequently, for the gamma-phosphate positioning of ATP.

Its subcellular location is the cytoplasm. The catalysed reaction is UDP-N-acetyl-alpha-D-muramoyl-L-alanyl-D-glutamate + meso-2,6-diaminopimelate + ATP = UDP-N-acetyl-alpha-D-muramoyl-L-alanyl-gamma-D-glutamyl-meso-2,6-diaminopimelate + ADP + phosphate + H(+). The protein operates within cell wall biogenesis; peptidoglycan biosynthesis. Catalyzes the addition of meso-diaminopimelic acid to the nucleotide precursor UDP-N-acetylmuramoyl-L-alanyl-D-glutamate (UMAG) in the biosynthesis of bacterial cell-wall peptidoglycan. In Cytophaga hutchinsonii (strain ATCC 33406 / DSM 1761 / CIP 103989 / NBRC 15051 / NCIMB 9469 / D465), this protein is UDP-N-acetylmuramoyl-L-alanyl-D-glutamate--2,6-diaminopimelate ligase.